A 116-amino-acid chain; its full sequence is Large ribosomal subunit protein eL31 (116 aa).

It belongs to the eukaryotic ribosomal protein eL31 family.

In Chlamydomonas reinhardtii (Chlamydomonas smithii), this protein is Large ribosomal subunit protein eL31 (RPL31).